Here is a 304-residue protein sequence, read N- to C-terminus: D-tagatose-1-phosphate kinase (304 aa).

Aspartate 250 serves as the catalytic Proton acceptor.

The protein belongs to the carbohydrate kinase PfkB family. Mg(2+) is required as a cofactor.

It carries out the reaction alpha-D-tagatopyranose 1-phosphate + ATP = D-tagatofuranose 1,6-bisphosphate + ADP + H(+). Its pathway is carbohydrate degradation. With respect to regulation, activity is inhibited by tagatose-6-phosphate and fructose-6-phosphate. Kinase involved in a D-tagatose catabolic pathway. Catalyzes the phosphorylation of D-tagatose-1-phosphate (Tag-1P) to D-tagatose-1,6-bisphosphate. Can also use D-fructose-1-phosphate, with 40-fold lower catalytic efficiency, but not tagatose-6-phosphate or fructose-6-phosphate. The substrate, which occurs in a pyranose form in solution, may undergo a change to the furanose conformation after binding to the enzyme, in order to permit phosphorylation at C-6. This is D-tagatose-1-phosphate kinase from Bacillus licheniformis (strain ATCC 14580 / DSM 13 / JCM 2505 / CCUG 7422 / NBRC 12200 / NCIMB 9375 / NCTC 10341 / NRRL NRS-1264 / Gibson 46).